A 342-amino-acid polypeptide reads, in one-letter code: AA9 family lytic polysaccharide monooxygenase H (342 aa).

The N-terminal stretch at 1 to 19 (MSKASALLAGLTGAALVAA) is a signal peptide. Cu(2+) is bound by residues histidine 20 and histidine 106. Cystine bridges form between cysteine 75-cysteine 195 and cysteine 117-cysteine 121. 2 residues coordinate O2: histidine 181 and glutamine 190. Tyrosine 192 is a binding site for Cu(2+). Residues 263-308 (ATVPGGGGANPTATTTAATSAAPSTTLRTTTTSAAQTTAPPSGDVQ) are disordered. The span at 272–305 (NPTATTTAATSAAPSTTLRTTTTSAAQTTAPPSG) shows a compositional bias: low complexity. The CBM1 domain occupies 306 to 342 (DVQTKYGQCGGNGWTGPTVCAPGSSCSVLNEWYSQCL).

This sequence belongs to the polysaccharide monooxygenase AA9 family. Cu(2+) is required as a cofactor.

It localises to the secreted. It carries out the reaction [(1-&gt;4)-beta-D-glucosyl]n+m + reduced acceptor + O2 = 4-dehydro-beta-D-glucosyl-[(1-&gt;4)-beta-D-glucosyl]n-1 + [(1-&gt;4)-beta-D-glucosyl]m + acceptor + H2O.. Its activity is regulated as follows. The presence of lignin presents a significant source of antioxidants, which probably increase the activity by trapping liberated oxidized fragments. In terms of biological role, lytic polysaccharide monooxygenase (LPMO) that depolymerizes crystalline and amorphous polysaccharides via the oxidation of scissile alpha- or beta-(1-4)-glycosidic bonds, yielding C1 or C4 oxidation products. Catalysis by LPMOs requires the reduction of the active-site copper from Cu(II) to Cu(I) by a reducing agent and H(2)O(2) or O(2) as a cosubstrate. Hydrolyzes weakly barley beta-glucan, carboxymethyl cellulose, lichenan, wheat arabinoxylan and birchwood xylan. Stimulates the hydrolysis of lignocellulosic substrates (such as hydrothermal pretreated wheat straw or steam-pretreated spruce), when combined with other cellulolytic enzymes. This chain is AA9 family lytic polysaccharide monooxygenase H, found in Thermothelomyces thermophilus (strain ATCC 42464 / BCRC 31852 / DSM 1799) (Sporotrichum thermophile).